The primary structure comprises 204 residues: Serotype 3 fimbrial subunit (204 aa).

A signal peptide spans 1 to 25 (MSKFSYPALRAALILAASPVLPALA). The cysteines at positions 41 and 84 are disulfide-linked.

The protein belongs to the fimbrial protein family.

It is found in the fimbrium. In terms of biological role, bordetella pertussis is the causative agent of whooping cough. An essential step in the disease process is the attachment of the bacteria to the ciliated epithelium of the respiratory tract, enabling the organism to resist normal host-clearance mechanisms. It is unclear which bacterial cell surface component are responsible for adherence but the fimbriae of B.pertussis are prime candidates for being involved in this process. The protein is Serotype 3 fimbrial subunit (fim3) of Bordetella pertussis (strain Tohama I / ATCC BAA-589 / NCTC 13251).